The chain runs to 224 residues: Ribonuclease T (224 aa).

The region spanning 20–195 is the Exonuclease domain; the sequence is VVIDVETAGF…YDTQKTAELF (176 aa). Residues Asp-23, Glu-25, His-182, and Asp-187 each coordinate Mg(2+). Residue His-182 is the Proton donor/acceptor of the active site.

It belongs to the RNase T family. Homodimer. The cofactor is Mg(2+).

In terms of biological role, trims short 3' overhangs of a variety of RNA species, leaving a one or two nucleotide 3' overhang. Responsible for the end-turnover of tRNA: specifically removes the terminal AMP residue from uncharged tRNA (tRNA-C-C-A). Also appears to be involved in tRNA biosynthesis. In Vibrio cholerae serotype O1 (strain ATCC 39315 / El Tor Inaba N16961), this protein is Ribonuclease T.